The primary structure comprises 145 residues: Arginine repressor (145 aa).

Belongs to the ArgR family.

It localises to the cytoplasm. Its pathway is amino-acid biosynthesis; L-arginine biosynthesis [regulation]. Its function is as follows. Regulates arginine biosynthesis genes. The sequence is that of Arginine repressor from Solibacter usitatus (strain Ellin6076).